The sequence spans 398 residues: Succinate--CoA ligase [ADP-forming] subunit beta (398 aa).

An ATP-grasp domain is found at 9-254 (KRLLHEYGAP…LSEEDPKEIE (246 aa)). ATP contacts are provided by residues Lys-46, 53–55 (GRG), Glu-109, Ala-112, and Glu-117. Residues Asn-209 and Asp-223 each contribute to the Mg(2+) site. Residues Asn-274 and 331-333 (GIM) each bind substrate.

Belongs to the succinate/malate CoA ligase beta subunit family. In terms of assembly, heterotetramer of two alpha and two beta subunits. Requires Mg(2+) as cofactor.

The catalysed reaction is succinate + ATP + CoA = succinyl-CoA + ADP + phosphate. It carries out the reaction GTP + succinate + CoA = succinyl-CoA + GDP + phosphate. It functions in the pathway carbohydrate metabolism; tricarboxylic acid cycle; succinate from succinyl-CoA (ligase route): step 1/1. Succinyl-CoA synthetase functions in the citric acid cycle (TCA), coupling the hydrolysis of succinyl-CoA to the synthesis of either ATP or GTP and thus represents the only step of substrate-level phosphorylation in the TCA. The beta subunit provides nucleotide specificity of the enzyme and binds the substrate succinate, while the binding sites for coenzyme A and phosphate are found in the alpha subunit. The protein is Succinate--CoA ligase [ADP-forming] subunit beta of Bartonella quintana (strain Toulouse) (Rochalimaea quintana).